Consider the following 849-residue polypeptide: Putative respiratory burst oxidase homolog protein G (849 aa).

Positions 1–17 (MQRVSFEVKDTEAEKSS) are enriched in basic and acidic residues. The tract at residues 1-53 (MQRVSFEVKDTEAEKSSSEILSGSLPSTYRNPAMENVGNAVDDGSSVKNNPKL) is disordered. Residues 1–303 (MQRVSFEVKD…RFFVLDSWQR (303 aa)) lie on the Cytoplasmic side of the membrane. The span at 18–27 (SEILSGSLPS) shows a compositional bias: low complexity. EF-hand-like stretches follow at residues 118 to 128 (TANTDGLLLRS) and 153 to 164 (SHLKGDVITETE). 2 EF-hand domains span residues 176–211 (SFDS…SSSA) and 220–255 (KADE…AETK). Residues aspartate 189, aspartate 191, aspartate 193, arginine 195, and glutamate 200 each contribute to the Ca(2+) site. Serine 270 is modified (phosphoserine). A helical membrane pass occupies residues 304–324 (VWVIALWLTIMAILFAYKYIQ). Topologically, residues 325–392 (YKNRAVYEVL…LNFHKVIAVG (68 aa)) are extracellular. A Ferric oxidoreductase domain is found at 342–502 (KGAAETLKLN…LFVIVYILLV (161 aa)). Residues 393-409 (IAIGVAIHSVSHLACDF) traverse the membrane as a helical segment. The Cytoplasmic portion of the chain corresponds to 410–444 (PLLIAATPAEYMPLGKFFGEEQPKRYLHFVKSTEG). A helical transmembrane segment spans residues 445–465 (ITGLVMVFLMVIAFTLAMPWF). Residues 466-489 (RRGKLEKKLPGPLKKLASFNAFWY) are Extracellular-facing. The helical transmembrane segment at 490 to 510 (THHLFVIVYILLVLHGYYIYL) threads the bilayer. The Cytoplasmic segment spans residues 511-518 (NKEWYKKT). The chain crosses the membrane as a helical span at residues 519–536 (TWMYLAVPVALYAYERLI). At 537 to 659 (RAFRSSIRTV…PYGAPAQDYK (123 aa)) the chain is on the extracellular side. The FAD-binding FR-type domain occupies 541 to 657 (SSIRTVKVLK…DGPYGAPAQD (117 aa)). A helical membrane pass occupies residues 660–680 (KYEVVLLIGLGIGATPMISII). Residues 681-849 (KDIINNTETK…TRFSFHKENF (169 aa)) lie on the Cytoplasmic side of the membrane.

This sequence belongs to the RBOH (TC 5.B.1.3) family. As to quaternary structure, monomer and homodimer.

It is found in the membrane. Functionally, calcium-dependent NADPH oxidase that generates superoxide. The sequence is that of Putative respiratory burst oxidase homolog protein G (RBOHG) from Arabidopsis thaliana (Mouse-ear cress).